Consider the following 166-residue polypeptide: Large ribosomal subunit protein uL10 (166 aa).

Belongs to the universal ribosomal protein uL10 family. In terms of assembly, part of the ribosomal stalk of the 50S ribosomal subunit. The N-terminus interacts with L11 and the large rRNA to form the base of the stalk. The C-terminus forms an elongated spine to which L12 dimers bind in a sequential fashion forming a multimeric L10(L12)X complex.

Forms part of the ribosomal stalk, playing a central role in the interaction of the ribosome with GTP-bound translation factors. The protein is Large ribosomal subunit protein uL10 of Shewanella amazonensis (strain ATCC BAA-1098 / SB2B).